We begin with the raw amino-acid sequence, 333 residues long: 5-formaminoimidazole-4-carboxamide-1-(beta)-D-ribofuranosyl 5'-monophosphate synthetase (333 aa).

5-amino-1-(5-phospho-beta-D-ribosyl)imidazole-4-carboxamide-binding residues include His21 and Ser84. An ATP-grasp domain is found at 118–313 (MELLAAAGIP…YFDEPMDMGE (196 aa)). ATP-binding positions include 141-187 (PVIV…VPAY) and Glu209. Asn229 contacts 5-amino-1-(5-phospho-beta-D-ribosyl)imidazole-4-carboxamide. 2 residues coordinate Mg(2+): Glu268 and Glu281.

This sequence belongs to the phosphohexose mutase family. Mg(2+) serves as cofactor. Mn(2+) is required as a cofactor.

The catalysed reaction is 5-amino-1-(5-phospho-beta-D-ribosyl)imidazole-4-carboxamide + formate + ATP = 5-formamido-1-(5-phospho-D-ribosyl)imidazole-4-carboxamide + ADP + phosphate. It participates in purine metabolism; IMP biosynthesis via de novo pathway; 5-formamido-1-(5-phospho-D-ribosyl)imidazole-4-carboxamide from 5-amino-1-(5-phospho-D-ribosyl)imidazole-4-carboxamide (formate route): step 1/1. In terms of biological role, catalyzes the ATP- and formate-dependent formylation of 5-aminoimidazole-4-carboxamide-1-beta-d-ribofuranosyl 5'-monophosphate (AICAR) to 5-formaminoimidazole-4-carboxamide-1-beta-d-ribofuranosyl 5'-monophosphate (FAICAR) in the absence of folates. The chain is 5-formaminoimidazole-4-carboxamide-1-(beta)-D-ribofuranosyl 5'-monophosphate synthetase from Pyrobaculum calidifontis (strain DSM 21063 / JCM 11548 / VA1).